Reading from the N-terminus, the 148-residue chain is Prefoldin subunit alpha (148 aa).

This sequence belongs to the prefoldin subunit alpha family. In terms of assembly, heterohexamer of two alpha and four beta subunits.

The protein localises to the cytoplasm. Molecular chaperone capable of stabilizing a range of proteins. Seems to fulfill an ATP-independent, HSP70-like function in archaeal de novo protein folding. This chain is Prefoldin subunit alpha (pfdA), found in Pyrococcus horikoshii (strain ATCC 700860 / DSM 12428 / JCM 9974 / NBRC 100139 / OT-3).